The chain runs to 304 residues: Insulin-like growth factor-binding protein 2 (304 aa).

Residues 1–34 (MLPRLGGPALPLLLPSLLLLLLLGAGGCGPGVRA) form the signal peptide. One can recognise an IGFBP N-terminal domain in the interval 36 to 118 (VLFRCPPCTP…VTGAGTCEKR (83 aa)). 9 disulfides stabilise this stretch: Cys40–Cys68, Cys43–Cys70, Cys51–Cys71, Cys59–Cys74, Cys82–Cys95, Cys89–Cys115, Cys206–Cys240, Cys251–Cys262, and Cys264–Cys285. The 83-residue stretch at 203–285 (RTPCQQELDQ…APTIRGDPEC (83 aa)) folds into the Thyroglobulin type-1 domain. A Cell attachment site motif is present at residues 280–282 (RGD).

In terms of assembly, interacts with IGF1. Interacts with IGF2. Interacts (via RGD motif) with integrin alpha5/ITGA5; this interaction induces cell migration, adhesion or apoptosis according to the context. Interacts with PTPRB; this interaction leads to PTPRB dimerization and inactivation. In terms of processing, cleaved by MMP9 leading to release of free IGF2 from IGFBP2-IGF2 complex, which contributes to enhance the motility and the growth of astrocytes. O-glycosylated. In adults, expressed in brain, testes, ovaries, and kidney. Expression in the adult liver is barely detectable.

Its subcellular location is the secreted. Functionally, multifunctional protein that plays a critical role in regulating the availability of IGFs such as IGF1 and IGF2 to their receptors and thereby regulates IGF-mediated cellular processes including proliferation, differentiation, and apoptosis in a cell-type specific manner. Functions coordinately with receptor protein tyrosine phosphatase beta/PTPRB and the IGF1 receptor to regulate IGF1-mediated signaling by stimulating the phosphorylation of PTEN leading to its inactivation and AKT1 activation. Plays a positive role in cell migration via interaction with integrin alpha5/ITGA5 through an RGD motif. Additionally, interaction with ITGA5/ITGB1 enhances the adhesion of endothelial progenitor cells to endothelial cells. Upon mitochondrial damage, facilitates apoptosis with ITGA5 of podocytes, and then activates the phosphorylation of focal adhesion kinase (FAK)-mediated mitochondrial injury. In Rattus norvegicus (Rat), this protein is Insulin-like growth factor-binding protein 2 (Igfbp2).